Consider the following 58-residue polypeptide: Ribulose bisphosphate carboxylase large chain (58 aa).

The propeptide occupies Met1–Ser2. Pro3 carries the N-acetylproline modification. Lys14 carries the post-translational modification N6,N6,N6-trimethyllysine.

The protein belongs to the RuBisCO large chain family. Type I subfamily. In terms of assembly, heterohexadecamer of 8 large chains and 8 small chains.

It localises to the plastid. The protein localises to the chloroplast. The catalysed reaction is 2 (2R)-3-phosphoglycerate + 2 H(+) = D-ribulose 1,5-bisphosphate + CO2 + H2O. The enzyme catalyses D-ribulose 1,5-bisphosphate + O2 = 2-phosphoglycolate + (2R)-3-phosphoglycerate + 2 H(+). In terms of biological role, ruBisCO catalyzes two reactions: the carboxylation of D-ribulose 1,5-bisphosphate, the primary event in carbon dioxide fixation, as well as the oxidative fragmentation of the pentose substrate in the photorespiration process. Both reactions occur simultaneously and in competition at the same active site. This Weinmannia silvicola (Towai) protein is Ribulose bisphosphate carboxylase large chain (rbcL).